We begin with the raw amino-acid sequence, 86 residues long: Cytochrome c oxidase subunit 6B1 (86 aa).

Ala-2 is modified (N-acetylalanine). Residues 27–73 (TRNCWQNYLDFHRCQKAMTAKGGDISVCEWYQRVYQSLCPTSWVTDW) form the CHCH domain. A Cx9C motif motif is present at residues 30-40 (CWQNYLDFHRC). Disulfide bonds link Cys-30-Cys-65 and Cys-40-Cys-54. The Cx10C motif motif lies at 54–65 (CEWYQRVYQSLC).

It belongs to the cytochrome c oxidase subunit 6B family. Component of the cytochrome c oxidase (complex IV, CIV), a multisubunit enzyme composed of 14 subunits. The complex is composed of a catalytic core of 3 subunits MT-CO1, MT-CO2 and MT-CO3, encoded in the mitochondrial DNA, and 11 supernumerary subunits COX4I, COX5A, COX5B, COX6A, COX6B, COX6C, COX7A, COX7B, COX7C, COX8 and NDUFA4, which are encoded in the nuclear genome. The complex exists as a monomer or a dimer and forms supercomplexes (SCs) in the inner mitochondrial membrane with NADH-ubiquinone oxidoreductase (complex I, CI) and ubiquinol-cytochrome c oxidoreductase (cytochrome b-c1 complex, complex III, CIII), resulting in different assemblies (supercomplex SCI(1)III(2)IV(1) and megacomplex MCI(2)III(2)IV(2)).

The protein resides in the mitochondrion inner membrane. The protein operates within energy metabolism; oxidative phosphorylation. Functionally, component of the cytochrome c oxidase, the last enzyme in the mitochondrial electron transport chain which drives oxidative phosphorylation. The respiratory chain contains 3 multisubunit complexes succinate dehydrogenase (complex II, CII), ubiquinol-cytochrome c oxidoreductase (cytochrome b-c1 complex, complex III, CIII) and cytochrome c oxidase (complex IV, CIV), that cooperate to transfer electrons derived from NADH and succinate to molecular oxygen, creating an electrochemical gradient over the inner membrane that drives transmembrane transport and the ATP synthase. Cytochrome c oxidase is the component of the respiratory chain that catalyzes the reduction of oxygen to water. Electrons originating from reduced cytochrome c in the intermembrane space (IMS) are transferred via the dinuclear copper A center (CU(A)) of subunit 2 and heme A of subunit 1 to the active site in subunit 1, a binuclear center (BNC) formed by heme A3 and copper B (CU(B)). The BNC reduces molecular oxygen to 2 water molecules using 4 electrons from cytochrome c in the IMS and 4 protons from the mitochondrial matrix. The sequence is that of Cytochrome c oxidase subunit 6B1 (COX6B1) from Pongo abelii (Sumatran orangutan).